A 58-amino-acid polypeptide reads, in one-letter code: UPF0391 membrane protein Sden_3712 (58 aa).

The next 2 membrane-spanning stretches (helical) occupy residues 6–26 and 27–47; these read LTFL…IAGA and AAGI…ISLV.

This sequence belongs to the UPF0391 family.

It localises to the cell membrane. This chain is UPF0391 membrane protein Sden_3712, found in Shewanella denitrificans (strain OS217 / ATCC BAA-1090 / DSM 15013).